The following is a 187-amino-acid chain: Photosystem I assembly protein Ycf4 (187 aa).

2 helical membrane passes run 25 to 47 (YWWASVVLLGASGFLIVGISSYL) and 62 to 84 (FVPQGLVMCFYGSAGILLSIYLW).

It belongs to the Ycf4 family.

The protein resides in the plastid. Its subcellular location is the chloroplast thylakoid membrane. In terms of biological role, seems to be required for the assembly of the photosystem I complex. This is Photosystem I assembly protein Ycf4 from Mesostigma viride (Green alga).